Consider the following 334-residue polypeptide: MVSYSKNVFVPLTRLCRNRCAYCTFRREPEEVRSPYLSPEEVFEIVEKGKEAGCKEVLFTFGERPEERYDEALEWLEEHGYSSTVEYLVDLCRRCVEEYDMLPHSNPGVITKREMRKLRRWNASMGLMMEILSERLCEESGPHEHSPGKRPEERLKVLKYAGELKVPFTTGILIGIGETWEERVKTLEEIQRMHERYGHVQEVIVQNFRTKPGIPMEDHPEPTPADLLRTVATARLILPDVPVQVPPNLNRETGQLALLAGANDWGGVSPVTKDYVNPEAPWPEIEELKRLTEDVGFRLRERLPIYPEYVRRGWYHANISEVVERLSDDEGFAR.

Residues 2 to 248 enclose the Radical SAM core domain; sequence VSYSKNVFVP…PDVPVQVPPN (247 aa). Residues Cys-16, Cys-20, and Cys-23 each coordinate [4Fe-4S] cluster.

This sequence belongs to the radical SAM superfamily. CofG family. Consists of two subunits, CofG and CofH. [4Fe-4S] cluster is required as a cofactor.

It carries out the reaction 5-amino-5-(4-hydroxybenzyl)-6-(D-ribitylimino)-5,6-dihydrouracil + S-adenosyl-L-methionine = 7,8-didemethyl-8-hydroxy-5-deazariboflavin + 5'-deoxyadenosine + L-methionine + NH4(+) + H(+). Its pathway is cofactor biosynthesis; coenzyme F0 biosynthesis. Its function is as follows. Catalyzes the radical-mediated synthesis of 7,8-didemethyl-8-hydroxy-5-deazariboflavin from 5-amino-5-(4-hydroxybenzyl)-6-(D-ribitylimino)-5,6-dihydrouracil. This is 7,8-didemethyl-8-hydroxy-5-deazariboflavin synthase from Methanopyrus kandleri (strain AV19 / DSM 6324 / JCM 9639 / NBRC 100938).